The primary structure comprises 485 residues: Glutamyl-tRNA(Gln) amidotransferase subunit A (485 aa).

Residues Lys-76 and Ser-155 each act as charge relay system in the active site. Ser-179 functions as the Acyl-ester intermediate in the catalytic mechanism.

This sequence belongs to the amidase family. GatA subfamily. As to quaternary structure, heterotrimer of A, B and C subunits.

The catalysed reaction is L-glutamyl-tRNA(Gln) + L-glutamine + ATP + H2O = L-glutaminyl-tRNA(Gln) + L-glutamate + ADP + phosphate + H(+). Allows the formation of correctly charged Gln-tRNA(Gln) through the transamidation of misacylated Glu-tRNA(Gln) in organisms which lack glutaminyl-tRNA synthetase. The reaction takes place in the presence of glutamine and ATP through an activated gamma-phospho-Glu-tRNA(Gln). This is Glutamyl-tRNA(Gln) amidotransferase subunit A from Marinobacter nauticus (strain ATCC 700491 / DSM 11845 / VT8) (Marinobacter aquaeolei).